Here is a 307-residue protein sequence, read N- to C-terminus: Ras-related protein RabR (307 aa).

Polar residues predominate over residues 1–10 (MTTTTLLSES). The interval 1 to 45 (MTTTTLLSESTNNSNNTNNNTNNNTNNTMNNNNNNNNNNTIGNNN) is disordered. The segment covering 11 to 45 (TNNSNNTNNNTNNNTNNTMNNNNNNNNNNTIGNNN) has biased composition (low complexity). Position 61 to 68 (61 to 68 (GDEEVGKG)) interacts with GTP. Residues 83 to 92 (ENLYNIEVDR) carry the Effector region motif. A GTP-binding site is contributed by 122-126 (NFHMH). Positions 175–185 (NFNCQSNSRNS) are enriched in low complexity. A disordered region spans residues 175-223 (NFNCQSNSRNSTNYNRHSVGNHCPNSPQKGEKENNTHSSTAPPAPPPLP). Over residues 186-202 (TNYNRHSVGNHCPNSPQ) the composition is skewed to polar residues. 230–233 (NKCD) serves as a coordination point for GTP. The residue at position 304 (C304) is a Cysteine methyl ester. C304 carries S-geranylgeranyl cysteine lipidation. Positions 305-307 (NLM) are cleaved as a propeptide — removed in mature form.

Belongs to the small GTPase superfamily. Rab family.

It is found in the cell membrane. In Dictyostelium discoideum (Social amoeba), this protein is Ras-related protein RabR (rabR).